Consider the following 308-residue polypeptide: Ribonuclease Z (308 aa).

Residues histidine 61, histidine 63, aspartate 65, histidine 66, histidine 142, aspartate 211, and histidine 270 each contribute to the Zn(2+) site. Catalysis depends on aspartate 65, which acts as the Proton acceptor.

Belongs to the RNase Z family. As to quaternary structure, homodimer. It depends on Zn(2+) as a cofactor.

It catalyses the reaction Endonucleolytic cleavage of RNA, removing extra 3' nucleotides from tRNA precursor, generating 3' termini of tRNAs. A 3'-hydroxy group is left at the tRNA terminus and a 5'-phosphoryl group is left at the trailer molecule.. Its function is as follows. Zinc phosphodiesterase, which displays some tRNA 3'-processing endonuclease activity. Probably involved in tRNA maturation, by removing a 3'-trailer from precursor tRNA. The protein is Ribonuclease Z of Clostridium beijerinckii (strain ATCC 51743 / NCIMB 8052) (Clostridium acetobutylicum).